The primary structure comprises 154 residues: Transcription antitermination protein NusB (154 aa).

Belongs to the NusB family.

Functionally, involved in transcription antitermination. Required for transcription of ribosomal RNA (rRNA) genes. Binds specifically to the boxA antiterminator sequence of the ribosomal RNA (rrn) operons. This Oleidesulfovibrio alaskensis (strain ATCC BAA-1058 / DSM 17464 / G20) (Desulfovibrio alaskensis) protein is Transcription antitermination protein NusB.